A 273-amino-acid polypeptide reads, in one-letter code: Type II methyltransferase M2.MboI (273 aa).

Belongs to the N(4)/N(6)-methyltransferase family.

It carries out the reaction a 2'-deoxyadenosine in DNA + S-adenosyl-L-methionine = an N(6)-methyl-2'-deoxyadenosine in DNA + S-adenosyl-L-homocysteine + H(+). Its function is as follows. A beta subtype methylase that recognizes the double-stranded sequence 5'-GATC-3', methylates A-2 on both strands, and protects the DNA from cleavage by the MboI endonuclease. This seems to be a weaker methylase than M1.MboI. This is Type II methyltransferase M2.MboI (mboIBM) from Moraxella bovis.